A 482-amino-acid chain; its full sequence is ATP synthase subunit beta (482 aa).

162-169 is an ATP binding site; sequence GGAGVGKT.

Belongs to the ATPase alpha/beta chains family. As to quaternary structure, F-type ATPases have 2 components, CF(1) - the catalytic core - and CF(0) - the membrane proton channel. CF(1) has five subunits: alpha(3), beta(3), gamma(1), delta(1), epsilon(1). CF(0) has four main subunits: a(1), b(1), b'(1) and c(9-12).

It is found in the cellular thylakoid membrane. The catalysed reaction is ATP + H2O + 4 H(+)(in) = ADP + phosphate + 5 H(+)(out). In terms of biological role, produces ATP from ADP in the presence of a proton gradient across the membrane. The catalytic sites are hosted primarily by the beta subunits. This chain is ATP synthase subunit beta, found in Trichormus variabilis (strain ATCC 29413 / PCC 7937) (Anabaena variabilis).